We begin with the raw amino-acid sequence, 441 residues long: Protein translocase subunit SecY (441 aa).

A run of 10 helical transmembrane segments spans residues Tyr25–Ile45, Ile78–Leu98, Leu126–Leu146, Ile155–Leu175, Ile184–Phe204, Val218–Ile238, Val275–Phe295, Tyr318–Phe338, Phe376–Met396, and Val398–Ile418.

It belongs to the SecY/SEC61-alpha family. In terms of assembly, component of the Sec protein translocase complex. Heterotrimer consisting of SecY, SecE and SecG subunits. The heterotrimers can form oligomers, although 1 heterotrimer is thought to be able to translocate proteins. Interacts with the ribosome. Interacts with SecDF, and other proteins may be involved. Interacts with SecA.

It localises to the cell membrane. The central subunit of the protein translocation channel SecYEG. Consists of two halves formed by TMs 1-5 and 6-10. These two domains form a lateral gate at the front which open onto the bilayer between TMs 2 and 7, and are clamped together by SecE at the back. The channel is closed by both a pore ring composed of hydrophobic SecY resides and a short helix (helix 2A) on the extracellular side of the membrane which forms a plug. The plug probably moves laterally to allow the channel to open. The ring and the pore may move independently. This is Protein translocase subunit SecY from Buchnera aphidicola subsp. Baizongia pistaciae (strain Bp).